The sequence spans 324 residues: Methionyl-tRNA formyltransferase (324 aa).

Residue 114–117 coordinates (6S)-5,6,7,8-tetrahydrofolate; that stretch reads SLLP.

Belongs to the Fmt family.

It catalyses the reaction L-methionyl-tRNA(fMet) + (6R)-10-formyltetrahydrofolate = N-formyl-L-methionyl-tRNA(fMet) + (6S)-5,6,7,8-tetrahydrofolate + H(+). Attaches a formyl group to the free amino group of methionyl-tRNA(fMet). The formyl group appears to play a dual role in the initiator identity of N-formylmethionyl-tRNA by promoting its recognition by IF2 and preventing the misappropriation of this tRNA by the elongation apparatus. The chain is Methionyl-tRNA formyltransferase from Azobacteroides pseudotrichonymphae genomovar. CFP2.